The sequence spans 956 residues: Probable hypoxanthine oxidase XdhD (956 aa).

Residues Gln-414, Phe-445, and Ala-727 each coordinate Mo-molybdopterin.

It belongs to the xanthine dehydrogenase family. [2Fe-2S] cluster serves as cofactor. Requires Mo-molybdopterin as cofactor.

In terms of biological role, probably has no xanthine dehydrogenase activity; however deletion results in increased adenine sensitivity, suggesting that this protein contributes to the conversion of adenine to guanine nucleotides during purine salvage. The polypeptide is Probable hypoxanthine oxidase XdhD (xdhD) (Escherichia coli (strain K12)).